The following is a 106-amino-acid chain: Thiosulfate sulfurtransferase GlpE (106 aa).

One can recognise a Rhodanese domain in the interval 16–104 (REQGAVLVDV…WRATYPDETV (89 aa)). The active-site Cysteine persulfide intermediate is the Cys-64.

Belongs to the GlpE family.

It localises to the cytoplasm. It carries out the reaction thiosulfate + hydrogen cyanide = thiocyanate + sulfite + 2 H(+). The catalysed reaction is thiosulfate + [thioredoxin]-dithiol = [thioredoxin]-disulfide + hydrogen sulfide + sulfite + 2 H(+). Transferase that catalyzes the transfer of sulfur from thiosulfate to thiophilic acceptors such as cyanide or dithiols. May function in a CysM-independent thiosulfate assimilation pathway by catalyzing the conversion of thiosulfate to sulfite, which can then be used for L-cysteine biosynthesis. The polypeptide is Thiosulfate sulfurtransferase GlpE (Pseudomonas savastanoi pv. phaseolicola (strain 1448A / Race 6) (Pseudomonas syringae pv. phaseolicola (strain 1448A / Race 6))).